The sequence spans 662 residues: UPF0313 protein CPR_1216 (662 aa).

Residues 296–567 form the Radical SAM core domain; sequence AIEEVKFSLV…AMQRALLQFK (272 aa). Residues Cys310, Cys314, and Cys317 each coordinate [4Fe-4S] cluster. The interval 597–662 is disordered; the sequence is RDKNSFGKGN…QRVSKGKKRR (66 aa). Basic and acidic residues predominate over residues 618–632; it reads SRNENSGRRESEDKK. The segment covering 633 to 644 has biased composition (basic residues); the sequence is RSSHSKKQRGNK.

This sequence belongs to the UPF0313 family. It depends on [4Fe-4S] cluster as a cofactor.

This chain is UPF0313 protein CPR_1216, found in Clostridium perfringens (strain SM101 / Type A).